Reading from the N-terminus, the 854-residue chain is Putative Tricorn-like protease C-terminal subunit (854 aa).

Catalysis depends on His-539, which acts as the Charge relay system. The PDZ-like stretch occupies residues Pro-554–Glu-646. Gly-709 lines the substrate pocket. The Nucleophile role is filled by Ser-756. Catalysis depends on Glu-814, which acts as the Charge relay system.

Belongs to the peptidase S41B family.

Its subcellular location is the cytoplasm. In terms of biological role, degrades oligopeptides in a sequential manner. This is Putative Tricorn-like protease C-terminal subunit (triC) from Sulfurisphaera tokodaii (strain DSM 16993 / JCM 10545 / NBRC 100140 / 7) (Sulfolobus tokodaii).